The chain runs to 578 residues: Raftlin (578 aa).

Residue Gly-2 is the site of N-myristoyl glycine attachment. A lipid anchor (S-palmitoyl cysteine) is attached at Cys-3. The segment covering 169–184 (VNSAGSSAPVSTANST) has biased composition (polar residues). Disordered stretches follow at residues 169-271 (VNSA…VHEE), 449-525 (FSRE…PGGL), and 551-578 (CTGHSNPGEDARDGDAEEVRELGTVEEN). 3 positions are modified to phosphoserine: Ser-183, Ser-199, and Ser-220. Residues 185-206 (EDARDAKNARGDHASLENEKPG) are compositionally biased toward basic and acidic residues. The span at 457-466 (RQMRKSKGKL) shows a compositional bias: basic residues. Positions 467 to 485 (SARDKQQAEENEKNLEDQS) are enriched in basic and acidic residues. Ser-505 bears the Phosphoserine mark. Composition is skewed to basic and acidic residues over residues 506 to 518 (EEMKGPVQEDKGE) and 557 to 578 (PGEDARDGDAEEVRELGTVEEN).

It belongs to the raftlin family. In terms of assembly, interacts with TLR4; the interaction occurs in response to lipopolysaccharide stimulation. Interacts with CLTC; the interaction occurs in response to pathogens. Interacts with AP2A1 and AP2B1. Expressed in B-cells (at protein level). Expressed in dendritic cells and macrophages.

It is found in the cell membrane. The protein localises to the cytoplasm. The protein resides in the membrane raft. Its subcellular location is the endosome. It localises to the early endosome. In terms of biological role, involved in protein trafficking via association with clathrin and AP2 complex. Upon bacterial lipopolysaccharide stimulation, mediates internalization of TLR4 to endosomes in dendritic cells and macrophages; and internalization of poly(I:C) to TLR3-positive endosomes in myeloid dendritic cells and epithelial cells; resulting in activation of TICAM1-mediated signaling and subsequent IFNB1 production. Involved in T-cell antigen receptor-mediated signaling by regulating tyrosine kinase LCK localization, T-cell dependent antibody production and cytokine secretion. May regulate B-cell antigen receptor-mediated signaling. May play a pivotal role in the formation and/or maintenance of lipid rafts. This chain is Raftlin (RFTN1), found in Homo sapiens (Human).